The sequence spans 258 residues: Trans-aconitate 2-methyltransferase (258 aa).

It belongs to the methyltransferase superfamily. Tam family.

It is found in the cytoplasm. The enzyme catalyses trans-aconitate + S-adenosyl-L-methionine = (E)-3-(methoxycarbonyl)pent-2-enedioate + S-adenosyl-L-homocysteine. Functionally, catalyzes the S-adenosylmethionine monomethyl esterification of trans-aconitate. This is Trans-aconitate 2-methyltransferase from Yersinia pestis bv. Antiqua (strain Antiqua).